Consider the following 426-residue polypeptide: Tyrosine--tRNA ligase (426 aa).

Position 37 (Y37) interacts with L-tyrosine. Residues 42–51 (PTADSLHLGH) carry the 'HIGH' region motif. Residues Y175 and Q179 each coordinate L-tyrosine. The 'KMSKS' region signature appears at 235–239 (KFGKT). K238 lines the ATP pocket. Positions 357–415 (TDLMQALVESELQPSRGQARKAIAANGVTVNGIKQPDPDYVLNENDRYFSNYTLLRRGK) constitute an S4 RNA-binding domain.

The protein belongs to the class-I aminoacyl-tRNA synthetase family. TyrS type 1 subfamily. Homodimer.

Its subcellular location is the cytoplasm. The enzyme catalyses tRNA(Tyr) + L-tyrosine + ATP = L-tyrosyl-tRNA(Tyr) + AMP + diphosphate + H(+). In terms of biological role, catalyzes the attachment of tyrosine to tRNA(Tyr) in a two-step reaction: tyrosine is first activated by ATP to form Tyr-AMP and then transferred to the acceptor end of tRNA(Tyr). The chain is Tyrosine--tRNA ligase from Klebsiella pneumoniae (strain 342).